Consider the following 808-residue polypeptide: Probable inorganic carbon transporter subunit DabA (808 aa).

Residues C334, D336, H494, and C509 each contribute to the Zn(2+) site.

It belongs to the inorganic carbon transporter (TC 9.A.2) DabA family. Forms a complex with DabB. Requires Zn(2+) as cofactor.

The protein resides in the cell inner membrane. Its function is as follows. Part of an energy-coupled inorganic carbon pump. This Rhodopseudomonas palustris (strain BisB5) protein is Probable inorganic carbon transporter subunit DabA.